The primary structure comprises 382 residues: Small ribosomal subunit protein bS1 homolog (382 aa).

4 S1 motif domains span residues 18–85 (GDVV…LSKR), 103–168 (GHVF…LSHK), 189–257 (GDVV…LSIK), and 274–343 (GDIR…LSIK). Ser-244 carries the phosphoserine modification.

Belongs to the bacterial ribosomal protein bS1 family.

This is Small ribosomal subunit protein bS1 homolog from Bacillus cereus (strain ATCC 10987 / NRS 248).